Reading from the N-terminus, the 228-residue chain is Prepilin leader peptidase/N-methyltransferase (228 aa).

Transmembrane regions (helical) follow at residues 18–38, 95–115, 116–136, 147–167, 168–188, and 204–224; these read LWGS…NVVI, RYPL…YLMA, PGVP…LAAI, LTLP…YVPL, AEAV…YWVF, and LLAA…LLLA.

This sequence belongs to the peptidase A24 family.

The protein localises to the cell inner membrane. The enzyme catalyses Typically cleaves a -Gly-|-Phe- bond to release an N-terminal, basic peptide of 5-8 residues from type IV prepilin, and then N-methylates the new N-terminal amino group, the methyl donor being S-adenosyl-L-methionine.. Its function is as follows. Plays an essential role in type IV pili and type II pseudopili formation by proteolytically removing the leader sequence from substrate proteins and subsequently monomethylating the alpha-amino group of the newly exposed N-terminal phenylalanine. In Klebsiella pneumoniae, this protein is Prepilin leader peptidase/N-methyltransferase (pulO).